The primary structure comprises 277 residues: Large ribosomal subunit protein uL2 (277 aa).

The tract at residues 222 to 277 is disordered; it reads GVAMNPVDHPHGGGEGRTSGGRHPVSPWGKPTKGKRTRSNKATDKFIMRSRHQRKK.

Belongs to the universal ribosomal protein uL2 family. Part of the 50S ribosomal subunit. Forms a bridge to the 30S subunit in the 70S ribosome.

In terms of biological role, one of the primary rRNA binding proteins. Required for association of the 30S and 50S subunits to form the 70S ribosome, for tRNA binding and peptide bond formation. It has been suggested to have peptidyltransferase activity; this is somewhat controversial. Makes several contacts with the 16S rRNA in the 70S ribosome. The chain is Large ribosomal subunit protein uL2 from Bartonella bacilliformis (strain ATCC 35685 / KC583 / Herrer 020/F12,63).